A 94-amino-acid polypeptide reads, in one-letter code: Venom protein 59.1 (94 aa).

A signal peptide spans 1–22 (MNSREMFCVFILFASFFYCSYA). Disulfide bonds link Cys-19-Cys-47, Cys-26-Cys-49, Cys-32-Cys-50, Cys-38-Cys-53, Cys-61-Cys-76, and Cys-70-Cys-91. The IGFBP N-terminal domain maps to 23-94 (EQECNCDKSC…GEALEICLRA (72 aa)).

As to expression, expressed by the venom gland.

The protein localises to the secreted. In Lychas mucronatus (Chinese swimming scorpion), this protein is Venom protein 59.1.